We begin with the raw amino-acid sequence, 757 residues long: Endosialin (757 aa).

Residues 1-17 form the signal peptide; sequence MLLRLLLAWAAAGPTLG. Over 18–687 the chain is Extracellular; it reads QDPWAAEPRA…EHSQRDDRWL (670 aa). The region spanning 30–156 is the C-type lectin domain; that stretch reads GPSSCYALFP…CTLAVDGYLC (127 aa). An O-linked (GalNAc...) threonine glycan is attached at Thr60. A disulfide bond links Cys131 and Cys147. Residues 162–232 form the Sushi domain; sequence GACPALQDEA…WSRAGPLCLG (71 aa). The region spanning 312–351 is the EGF-like; calcium-binding domain; that stretch reads DTDECQIAGVCQQMCVNYVGGFECYCSEGHELEADGISCS. Cystine bridges form between Cys316-Cys326, Cys322-Cys335, and Cys337-Cys350. O-linked (GalNAc...) threonine glycosylation is found at Thr401, Thr428, Thr448, Thr456, Thr459, Thr472, Thr519, Thr541, Thr543, Thr544, Thr545, Thr587, Thr593, Thr594, and Thr595. 2 O-linked (GalNAc...) serine glycosylation sites follow: Ser598 and Ser601. O-linked (GalNAc...) threonine glycosylation is found at Thr612 and Thr619. Low complexity predominate over residues 618–627; it reads PTLLPSQSPT. The disordered stretch occupies residues 618–662; that stretch reads PTLLPSQSPTNQTSPISPTHPHSKAPQIPREDGPSPKLALWLPSP. Residues Ser623 and Ser625 are each glycosylated (O-linked (GalNAc...) serine). Thr627 and Thr630 each carry an O-linked (GalNAc...) threonine glycan. O-linked (GalNAc...) serine glycosylation occurs at Ser631. The O-linked (GalNAc...) threonine glycan is linked to Thr636. Ser640 is a glycosylation site (O-linked (GalNAc...) serine). Residues 688–708 traverse the membrane as a helical segment; that stretch reads LVALLVPTCVFLVVLLALGIV. Residues 709-757 lie on the Cytoplasmic side of the membrane; the sequence is YCTRCGPHAPNKRITDCYRWVIHAGSKSPTEPMPPRGSLTGVQTCRTSV. Residues 737 to 757 are disordered; the sequence is PTEPMPPRGSLTGVQTCRTSV. Phosphoserine is present on Ser746. Residues 748 to 757 show a composition bias toward polar residues; sequence TGVQTCRTSV.

As to quaternary structure, interacts with PDGFRA; this interaction promotes PDGF receptor signaling pathway. Interacts with integrin beta-1/ITGB1. Interacts with insulin receptor/INSR; this interaction diminishes INSR autophosphorylation. Post-translationally, O-glycosylated with sialylated oligosaccharides. May be N-glycosylated. Expressed in tumor endothelial cells but absent or barely detectable in normal endothelial cells. Expressed in metastatic lesions of the liver and during angiogenesis of corpus luteum formation and wound healing. Expressed in vascular endothelial cells of malignant tumors but not in normal blood vessels. Expressed in stromal fibroblasts. Strongly expressed in pericytes. Expressed on stromal cells and cells with lymphoid morphology such a T-cells.

It is found in the membrane. Functionally, cell surface glycoprotein involved in various biological processes including angiogenesis, immune response modulation, and tissue remodeling and repair. Participates in pericyte proliferation through positive modulation of the PDGF receptor signaling pathway. Acts as a scaffold for factor X, triggering allosteric changes and the spatial re-alignment of factor X with the TF-factor VIIa complex, thereby enhancing coagulation activation. Modulates the insulin signaling pathway by interacting with insulin receptor/INSR and by diminishing its capacity to be autophosphorylated in response to insulin. Also regulates LPS-induced inflammatory response in macrophages by favoring the production of proinflammatory cytokines. In human, negatively regulates T-cell proliferation compared with stromal cells where it increases proliferation. This is Endosialin (CD248) from Homo sapiens (Human).